The primary structure comprises 403 residues: Renin (403 aa).

Positions 1–22 (MARCRMPRWGLLLVLWGSCTFG) are cleaved as a signal peptide. The propeptide at 23-65 (LPADTGAFRRIFLKKMPSIRESLKERGVDVAGLGAEWNQFTKR) is activation peptide. Asn-70 carries an N-linked (GlcNAc...) asparagine glycan. One can recognise a Peptidase A1 domain in the interval 85–400 (YYGEIGIGTP…DRHNNRIGFA (316 aa)). Residue Asp-103 is part of the active site. Cys-116 and Cys-123 are disulfide-bonded. Residue Asn-140 is glycosylated (N-linked (GlcNAc...) asparagine). Cys-279 and Cys-283 form a disulfide bridge. The active site involves Asp-288. Cys-322 and Cys-359 are oxidised to a cystine.

The protein belongs to the peptidase A1 family. Interacts with ATP6AP2.

It localises to the secreted. Its subcellular location is the membrane. The catalysed reaction is Cleavage of Leu-|-Xaa bond in angiotensinogen to generate angiotensin I.. Its activity is regulated as follows. Interaction with ATP6AP2 results in a 5-fold increased efficiency in angiotensinogen processing. In terms of biological role, renin is a highly specific endopeptidase, whose only known function is to generate angiotensin I from angiotensinogen in the plasma, initiating a cascade of reactions that produce an elevation of blood pressure and increased sodium retention by the kidney. The sequence is that of Renin (REN) from Canis lupus familiaris (Dog).